A 319-amino-acid chain; its full sequence is ATP-dependent 6-phosphofructokinase (319 aa).

Gly11 contributes to the ATP binding site. 21-25 (RAVVR) is a binding site for ADP. Residues 72 to 73 (RC) and 102 to 105 (GDGS) each bind ATP. Residue Asp103 participates in Mg(2+) binding. 125 to 127 (TID) provides a ligand contact to substrate. Asp127 (proton acceptor) is an active-site residue. Residue Arg154 participates in ADP binding. Substrate is bound by residues Arg162 and 169–171 (MGR). ADP-binding positions include 185 to 187 (GAE), Arg211, and 213 to 215 (KKH). Substrate is bound by residues Glu222, Arg243, and 249–252 (HVQR).

It belongs to the phosphofructokinase type A (PFKA) family. ATP-dependent PFK group I subfamily. Prokaryotic clade 'B1' sub-subfamily. Homotetramer. Mg(2+) is required as a cofactor.

The protein resides in the cytoplasm. It carries out the reaction beta-D-fructose 6-phosphate + ATP = beta-D-fructose 1,6-bisphosphate + ADP + H(+). It participates in carbohydrate degradation; glycolysis; D-glyceraldehyde 3-phosphate and glycerone phosphate from D-glucose: step 3/4. Allosterically activated by ADP and other diphosphonucleosides, and allosterically inhibited by phosphoenolpyruvate. Its function is as follows. Catalyzes the phosphorylation of D-fructose 6-phosphate to fructose 1,6-bisphosphate by ATP, the first committing step of glycolysis. The sequence is that of ATP-dependent 6-phosphofructokinase from Bacillus anthracis (strain A0248).